Reading from the N-terminus, the 595-residue chain is Mitoguardin 1 (595 aa).

Helical transmembrane passes span 11-31 (LPIK…YYSL) and 38-58 (TGTK…IIIA).

This sequence belongs to the mitoguardin family. Homodimer and heterodimer; forms heterodimers with miga2.

It is found in the mitochondrion outer membrane. Regulator of mitochondrial fusion: acts by forming homo- and heterodimers at the mitochondrial outer membrane and facilitating the formation of pld6/MitoPLD dimers. May act by regulating phospholipid metabolism via pld6/MitoPLD. This is Mitoguardin 1 from Danio rerio (Zebrafish).